Consider the following 200-residue polypeptide: Phospholipase A2 inhibitor gamma subunit B (200 aa).

An N-terminal signal peptide occupies residues 1–19 (MKFLLFCCLFGTFLATGMC). 8 disulfide bridges follow: C22–C46, C25–C32, C39–C67, C73–C94, C95–C100, C120–C145, C138–C165, and C171–C191. N-linked (GlcNAc...) asparagine glycosylation is present at N31.

It belongs to the CNF-like-inhibitor family. In terms of assembly, heterodimer of subunit A and subunit B. N-glycosylated. In terms of tissue distribution, expressed by the liver. Not expressed in esophagus, stomach, pancreas, spleen, gall bladder, small intestine, rectum, kidney, trachea, lung, testis and body fat.

Its subcellular location is the secreted. Its function is as follows. Inhibits the enzymatic activity of phospholipase A2 (PA2). The protein is Phospholipase A2 inhibitor gamma subunit B of Elaphe quadrivirgata (Japanese four-lined ratsnake).